Reading from the N-terminus, the 295-residue chain is ATP synthase gamma chain (295 aa).

The protein belongs to the ATPase gamma chain family. F-type ATPases have 2 components, CF(1) - the catalytic core - and CF(0) - the membrane proton channel. CF(1) has five subunits: alpha(3), beta(3), gamma(1), delta(1), epsilon(1). CF(0) has three main subunits: a, b and c.

Its subcellular location is the cell membrane. Produces ATP from ADP in the presence of a proton gradient across the membrane. The gamma chain is believed to be important in regulating ATPase activity and the flow of protons through the CF(0) complex. This chain is ATP synthase gamma chain, found in Desulforudis audaxviator (strain MP104C).